We begin with the raw amino-acid sequence, 82 residues long: Small ribosomal subunit protein bS16 (82 aa).

This sequence belongs to the bacterial ribosomal protein bS16 family.

The polypeptide is Small ribosomal subunit protein bS16 (Edwardsiella ictaluri (strain 93-146)).